Reading from the N-terminus, the 165-residue chain is Bark lectin isoform 2 (165 aa).

Residues Asn27 and Asn57 are each glycosylated (N-linked (GlcNAc...) asparagine). 2 cysteine pairs are disulfide-bonded: Cys33/Cys80 and Cys126/Cys133.

Belongs to the protease inhibitor I3 (leguminous Kunitz-type inhibitor) family. In terms of assembly, dimer.

Glucose and N-acetylglucosamine binding lectin. Has hemagglutinating activity against human and rabbit erythrocytes which does not require divalent cations. Inhibits factor Xa and, to a lesser extent, trypsin. Does not inhibit neutrophil elastase, human plasma kallikrein, papain, human plasmin, porcine pancreatic kallikrein and bovin chymotrypsin. Has insecticidal activity against the termite species N.corniger. Induces apoptosis in prostrate cancer cell lines DU145 and PC3. The sequence is that of Bark lectin isoform 2 from Crateva tapia (Garlic-pear tree).